Reading from the N-terminus, the 420-residue chain is Protein disulfide isomerase Creld1 (420 aa).

The signal sequence occupies residues 1 to 29; that stretch reads MAPLPPRGLVPSLLWCLSLFLSLPGPVWL. Residues 30–362 are Extracellular-facing; it reads QPSPPPHPSP…GFFAEMTEDE (333 aa). Positions 46-49 match the CXXC motif; the sequence is CHTC. 4 cysteine pairs are disulfide-bonded: Cys46/Cys49, Cys155/Cys169, Cys163/Cys181, and Cys183/Cys192. An EGF-like 1 domain is found at 153–193; the sequence is LPCPGGTERPCGGYGQCEGEGTRGGSGHCDCQAGYGGEACG. An N-linked (GlcNAc...) asparagine glycan is attached at Asn205. FU repeat units lie at residues 208-255 and 268-315; these read HLVC…EQAT and SYEC…VVCP. The CXXC signature appears at 278–281; sequence CLGC. Disulfide bonds link Cys278-Cys281, Cys309-Cys321, Cys314-Cys330, and Cys332-Cys343. An EGF-like 2; calcium-binding domain is found at 305–342; that stretch reads DVDECETVVCPGENEKCENTEGGYRCVCAEGYRQEDGI. Residues 363-383 traverse the membrane as a helical segment; it reads MVVLQQMFFGVIICALATLAA. Position 384 (Lys384) is a topological domain, cytoplasmic. The helical transmembrane segment at 385–405 threads the bilayer; the sequence is GDLVFTAIFIGAVAAMTGYWL. Over 406–420 the chain is Extracellular; sequence SERSDRVLEGFIKGR.

The protein belongs to the CRELD family. Expressed in myoblast C2C12 cells (at protein level).

It localises to the membrane. The catalysed reaction is Catalyzes the rearrangement of -S-S- bonds in proteins.. Its function is as follows. Protein disulfide isomerase. Promotes the localization of acetylcholine receptors (AChRs) to the plasma membrane. This is Protein disulfide isomerase Creld1 (Creld1) from Mus musculus (Mouse).